A 1721-amino-acid chain; its full sequence is Ras guanine nucleotide exchange factor R (1721 aa).

A coiled-coil region spans residues 148–279; that stretch reads QLEDEVDLVH…LQQQQQQQRS (132 aa). Disordered stretches follow at residues 213-232, 445-515, 551-701, 716-766, 797-837, and 929-981; these read QQQK…KEEK, SSLG…NQQP, ATTT…VDKQ, RTPL…KSPS, TITI…TPNK, and DEVS…DPVS. Residues 216-232 show a composition bias toward basic and acidic residues; that stretch reads KHQEEKEKNDQKEKEEK. Low complexity-rich tracts occupy residues 454 to 469, 479 to 493, 501 to 515, and 551 to 581; these read SPEK…STSE, HNNN…STNN, PSLS…NQQP, and ATTT…LSIS. A compositionally biased stretch (polar residues) spans 618–627; the sequence is NGTTSPRNNE. Low complexity-rich tracts occupy residues 628–651 and 663–686; these read SSVT…VNTI and TPTT…SQND. Basic and acidic residues predominate over residues 687-701; sequence KQNENNNKENFVDKQ. 3 stretches are compositionally biased toward low complexity: residues 724-748, 797-836, and 933-952; these read SSNS…TNSS, TITI…TTPN, and ESSS…NTPS. Residues 802-831 adopt a coiled-coil conformation; that stretch reads NNNNNNNNNNNNNNNNNNNIQQQQQQQQQI. A compositionally biased stretch (polar residues) spans 968 to 978; that stretch reads NLSSINNSSYD. One can recognise an N-terminal Ras-GEF domain in the interval 1291-1411; that stretch reads GRYVPKAGTL…ILGGLIKKKE (121 aa). Residues 1447–1676 enclose the Ras-GEF domain; it reads NESEIARQLT…YQLSLIREPR (230 aa).

Post-translationally, phosphorylated on threonine residues.

Functionally, promotes the exchange of Ras-bound GDP by GTP. May also play a role in the activation of rasG. This is Ras guanine nucleotide exchange factor R (gefR) from Dictyostelium discoideum (Social amoeba).